The following is a 220-amino-acid chain: Ribose-5-phosphate isomerase A (220 aa).

Residues 25–28 (TGST), 80–83 (DGAD), and 93–96 (KGGG) contribute to the substrate site. E102 functions as the Proton acceptor in the catalytic mechanism. Residue K120 participates in substrate binding.

Belongs to the ribose 5-phosphate isomerase family. Homodimer.

It catalyses the reaction aldehydo-D-ribose 5-phosphate = D-ribulose 5-phosphate. Its pathway is carbohydrate degradation; pentose phosphate pathway; D-ribose 5-phosphate from D-ribulose 5-phosphate (non-oxidative stage): step 1/1. Functionally, catalyzes the reversible conversion of ribose-5-phosphate to ribulose 5-phosphate. This Bacillus cereus (strain ATCC 10987 / NRS 248) protein is Ribose-5-phosphate isomerase A.